The sequence spans 142 residues: MFQGASALTLDAKGRMSIPSRYRDALQTQAEGRVTITRHPDGCLLLFPRPEWEIFRDKVDKLPMNATWWKRIFLGNAMDVDMDGAGRVLVSPELRTAGGLAKEVTLLGMGRHFELWDAQTYTAKEQAAMAEGMPDALKDFTF.

SpoVT-AbrB domains lie at 5–51 (ASAL…PRPE) and 77–120 (AMDV…DAQT).

Belongs to the MraZ family. As to quaternary structure, forms oligomers.

It is found in the cytoplasm. Its subcellular location is the nucleoid. This Paraburkholderia xenovorans (strain LB400) protein is Transcriptional regulator MraZ.